A 375-amino-acid polypeptide reads, in one-letter code: MKFELDTTDGRARRGRLVFDRGVVETPCFMPVGTYGTVKGMTPEEVEATGAQIILGNTFHLWLRPGQEIMKLHGDLHDFMQWKGPILTDSGGFQVFSLGDIRKITEQGVHFRNPINGDPIFLDPEKSMEIQYDLGSDIVMIFDECTPYPADWDYAKRSMEMSLRWAKRSRERFDSLGNKNALFGIIQGSVYEDLRDISVKGLVDIGFDGYAVGGLAVGEPKADMHRILEHVCPQIPADKPRYLMGVGKPEDLVEGVRRGIDMFDCVMPTRNARNGHLFVTDGVVKIRNAKYKSDTGPLDPECDCYTCRNYSRAYLHHLDRCNEILGARLNTIHNLRYYQRLMAGLRKAIEEGKLESFVTDFYQRQGREVPPLNVD.

The active-site Proton acceptor is the Asp-89. Substrate is bound by residues 89 to 93 (DSGGF), Asp-143, Gln-187, and Gly-214. The RNA binding stretch occupies residues 245–251 (GVGKPED). The active-site Nucleophile is Asp-264. An RNA binding; important for wobble base 34 recognition region spans residues 269-273 (TRNAR). Cys-302, Cys-304, Cys-307, and His-333 together coordinate Zn(2+).

The protein belongs to the queuine tRNA-ribosyltransferase family. In terms of assembly, homodimer. Within each dimer, one monomer is responsible for RNA recognition and catalysis, while the other monomer binds to the replacement base PreQ1. Requires Zn(2+) as cofactor.

The enzyme catalyses 7-aminomethyl-7-carbaguanine + guanosine(34) in tRNA = 7-aminomethyl-7-carbaguanosine(34) in tRNA + guanine. Its pathway is tRNA modification; tRNA-queuosine biosynthesis. Functionally, catalyzes the base-exchange of a guanine (G) residue with the queuine precursor 7-aminomethyl-7-deazaguanine (PreQ1) at position 34 (anticodon wobble position) in tRNAs with GU(N) anticodons (tRNA-Asp, -Asn, -His and -Tyr). Catalysis occurs through a double-displacement mechanism. The nucleophile active site attacks the C1' of nucleotide 34 to detach the guanine base from the RNA, forming a covalent enzyme-RNA intermediate. The proton acceptor active site deprotonates the incoming PreQ1, allowing a nucleophilic attack on the C1' of the ribose to form the product. After dissociation, two additional enzymatic reactions on the tRNA convert PreQ1 to queuine (Q), resulting in the hypermodified nucleoside queuosine (7-(((4,5-cis-dihydroxy-2-cyclopenten-1-yl)amino)methyl)-7-deazaguanosine). The polypeptide is Queuine tRNA-ribosyltransferase (Escherichia coli O81 (strain ED1a)).